The primary structure comprises 348 residues: Methylthioribose-1-phosphate isomerase (348 aa).

Substrate is bound by residues 54 to 56, arginine 96, and glutamine 199; that span reads RGA. Residue aspartate 240 is the Proton donor of the active site. 250–251 contributes to the substrate binding site; sequence NK.

It belongs to the eIF-2B alpha/beta/delta subunits family. MtnA subfamily.

The enzyme catalyses 5-(methylsulfanyl)-alpha-D-ribose 1-phosphate = 5-(methylsulfanyl)-D-ribulose 1-phosphate. Its pathway is amino-acid biosynthesis; L-methionine biosynthesis via salvage pathway; L-methionine from S-methyl-5-thio-alpha-D-ribose 1-phosphate: step 1/6. Its function is as follows. Catalyzes the interconversion of methylthioribose-1-phosphate (MTR-1-P) into methylthioribulose-1-phosphate (MTRu-1-P). This is Methylthioribose-1-phosphate isomerase from Thioalkalivibrio sulfidiphilus (strain HL-EbGR7).